Here is a 406-residue protein sequence, read N- to C-terminus: Solute carrier family 22 member 18 (406 aa).

The next 10 membrane-spanning stretches (helical) occupy residues Gly8–Phe28, Val43–Phe63, Ala85–Phe105, Leu140–Thr160, Ala168–Ala188, Phe226–Ile246, Ala258–Gly278, Leu295–Phe315, Leu316–Thr336, and Gly374–Trp394.

The protein belongs to the major facilitator (TC 2.A.1) superfamily. Organic cation transporter (TC 2.A.1.19) family. In terms of assembly, interacts with RNF167. In terms of tissue distribution, expressed at high levels in fetal and adult kidney and liver, and extraembryonic membranes (yolk sac). Expressed at moderate levels in intestine, heart, lung and testis.

The protein localises to the apical cell membrane. Its function is as follows. May act as a transporter of organic cations based on a proton efflux antiport mechanism. May play a role in the transport of chloroquine and quinidine-related compounds in kidney. Plays a role in the regulation of lipid metabolism. This Mus musculus (Mouse) protein is Solute carrier family 22 member 18 (Slc67a1).